A 513-amino-acid chain; its full sequence is Putative fucosyltransferase-like protein (513 aa).

Residues Met1–Ser34 are disordered. Topologically, residues Met1 to Lys39 are cytoplasmic. A compositionally biased stretch (low complexity) spans Ser25 to Ser34. Residues Leu40–Gly60 form a helical; Signal-anchor for type II membrane protein membrane-spanning segment. Topologically, residues Arg61–Val513 are lumenal. Asn348 and Asn493 each carry an N-linked (GlcNAc...) asparagine glycan.

This sequence belongs to the glycosyltransferase 10 family.

The protein localises to the golgi apparatus. It is found in the golgi stack membrane. It functions in the pathway protein modification; protein glycosylation. Its function is as follows. May be involved in cell wall biosynthesis. May act as a fucosyltransferase. The protein is Putative fucosyltransferase-like protein (FUT12) of Arabidopsis thaliana (Mouse-ear cress).